A 412-amino-acid polypeptide reads, in one-letter code: L-cysteine:1D-myo-inositol 2-amino-2-deoxy-alpha-D-glucopyranoside ligase (412 aa).

Position 43 (Cys43) interacts with Zn(2+). L-cysteinyl-5'-AMP contacts are provided by residues 43 to 46, Thr58, and 81 to 83; these read CGIT and NVT. The short motif at 45-55 is the 'HIGH' region element; that stretch reads ITPYDATHLGH. Residues 186 to 191 carry the 'ERGGDP' region motif; it reads ERGGDP. Trp227 lines the L-cysteinyl-5'-AMP pocket. Position 231 (Cys231) interacts with Zn(2+). 249–251 is a binding site for L-cysteinyl-5'-AMP; sequence GND. Residue His256 coordinates Zn(2+). Residue Ile283 coordinates L-cysteinyl-5'-AMP. The 'KMSKS' region signature appears at 289–293; sequence KMSKS.

Belongs to the class-I aminoacyl-tRNA synthetase family. MshC subfamily. Monomer. It depends on Zn(2+) as a cofactor.

The enzyme catalyses 1D-myo-inositol 2-amino-2-deoxy-alpha-D-glucopyranoside + L-cysteine + ATP = 1D-myo-inositol 2-(L-cysteinylamino)-2-deoxy-alpha-D-glucopyranoside + AMP + diphosphate + H(+). Functionally, catalyzes the ATP-dependent condensation of GlcN-Ins and L-cysteine to form L-Cys-GlcN-Ins. This chain is L-cysteine:1D-myo-inositol 2-amino-2-deoxy-alpha-D-glucopyranoside ligase, found in Salinispora arenicola (strain CNS-205).